Consider the following 334-residue polypeptide: Porphobilinogen deaminase (334 aa).

Position 255 is an S-(dipyrrolylmethanemethyl)cysteine (Cys-255).

This sequence belongs to the HMBS family. As to quaternary structure, monomer. The cofactor is dipyrromethane.

The catalysed reaction is 4 porphobilinogen + H2O = hydroxymethylbilane + 4 NH4(+). The protein operates within porphyrin-containing compound metabolism; protoporphyrin-IX biosynthesis; coproporphyrinogen-III from 5-aminolevulinate: step 2/4. In terms of biological role, tetrapolymerization of the monopyrrole PBG into the hydroxymethylbilane pre-uroporphyrinogen in several discrete steps. The chain is Porphobilinogen deaminase from Burkholderia orbicola (strain MC0-3).